The following is a 483-amino-acid chain: MQTLNRRDFPGRSHPDKIIQFGEGNFLRAFVDWQIDLLNEHTDLNAGIVVIRPIDTDFPPSLSTQDGLYTAVIRGLNEQGEAVRESRLIRSVNREINIYRQFDEYLALARDPNIRFMFSNTTEAGIAWNEADQFSDAPPSSFPAKLTRLLFERFEHFSGAADKGWVLLPCELIDYNGEALRELVLRYASHWQLPAAFTQWLTENNTFCSTLVDRIVTGYPRDEVAALQAELGYQDSFLDTAEYFYLFVIQGPKELAQELRLDKLDLNVRIVDDIKPYKERKVAILNGAHTALVPVAYLSGLDTVGQTMDDVQISSFVEKTITEEIVPVLDLPEDELLSFSQAVLSRFRNPFIQHQLLSIALNGMTKFRTRILPQLLTYQQQQGKLPPRLTFALAALIAFYRGERDGQTYPLQDDAHWLERYSTLWNGVKHGDIKLAELVNTVLSDTAHWGQDLTAVPQLANQVTEQLQTIIDSGMRAAVAAYS.

18-29 (IIQFGEGNFLRA) is a binding site for NAD(+).

This sequence belongs to the mannitol dehydrogenase family. UxaB subfamily.

It carries out the reaction D-altronate + NAD(+) = keto-D-tagaturonate + NADH + H(+). It participates in carbohydrate metabolism; pentose and glucuronate interconversion. The protein is Altronate oxidoreductase of Yersinia enterocolitica serotype O:8 / biotype 1B (strain NCTC 13174 / 8081).